The following is a 311-amino-acid chain: Probable dihydroorotate dehydrogenase A (fumarate) (311 aa).

FMN contacts are provided by residues Ser20 and 44 to 45; that span reads KT. Substrate-binding positions include Lys44, 68–72, and Asn127; that span reads NSMGL. An FMN-binding site is contributed by Asn127. The Nucleophile role is filled by Cys130. Residues Lys164 and Ile192 each coordinate FMN. Position 193 to 194 (193 to 194) interacts with substrate; sequence NS. FMN contacts are provided by residues Gly221, 249-250, and 271-272; these read GG and GT.

The protein belongs to the dihydroorotate dehydrogenase family. Type 1 subfamily. Homodimer. The cofactor is FMN.

The protein localises to the cytoplasm. It catalyses the reaction (S)-dihydroorotate + fumarate = orotate + succinate. The protein operates within pyrimidine metabolism; UMP biosynthesis via de novo pathway. Its function is as follows. Catalyzes the conversion of dihydroorotate to orotate with fumarate as the electron acceptor. This chain is Probable dihydroorotate dehydrogenase A (fumarate) (pyrDA), found in Enterococcus faecalis (strain ATCC 700802 / V583).